A 727-amino-acid chain; its full sequence is NHL repeat-containing protein 2 (727 aa).

One can recognise a Thioredoxin domain in the interval 43–198; the sequence is RERDLTVPEL…TLKFYKERGQ (156 aa). NHL repeat units lie at residues 207–249, 260–302, 330–364, 404–434, 456–500, and 513–557; these read KLYK…TLKN, NSGR…IDLE, ISSP…VWAL, FAQP…VRMI, AFGD…VDPK, and ASNV…LDLE.

In terms of assembly, monomer.

The protein localises to the cytoplasm. It localises to the cytosol. Functionally, required for normal embryonic development. This Gallus gallus (Chicken) protein is NHL repeat-containing protein 2 (NHLRC2).